We begin with the raw amino-acid sequence, 318 residues long: Bifunctional protein FolD 3 (318 aa).

NADP(+) is bound by residues 173 to 175 (GRS) and Ile242.

The protein belongs to the tetrahydrofolate dehydrogenase/cyclohydrolase family. As to quaternary structure, homodimer.

The catalysed reaction is (6R)-5,10-methylene-5,6,7,8-tetrahydrofolate + NADP(+) = (6R)-5,10-methenyltetrahydrofolate + NADPH. The enzyme catalyses (6R)-5,10-methenyltetrahydrofolate + H2O = (6R)-10-formyltetrahydrofolate + H(+). It participates in one-carbon metabolism; tetrahydrofolate interconversion. Its function is as follows. Catalyzes the oxidation of 5,10-methylenetetrahydrofolate to 5,10-methenyltetrahydrofolate and then the hydrolysis of 5,10-methenyltetrahydrofolate to 10-formyltetrahydrofolate. This chain is Bifunctional protein FolD 3, found in Rubrobacter xylanophilus (strain DSM 9941 / JCM 11954 / NBRC 16129 / PRD-1).